Here is a 775-residue protein sequence, read N- to C-terminus: Endothelin-converting enzyme-like 1 (775 aa).

Residues 1–61 (MEAPYSMTAH…LPRWNRREVC (61 aa)) are Cytoplasmic-facing. Positions 23 to 51 (CGTGGARGTSLPPGFPRSSGRSASGARSG) are disordered. Residues 32–51 (SLPPGFPRSSGRSASGARSG) show a composition bias toward low complexity. Residues 62-82 (LLSGLVFAAGLCAILAAMLAL) traverse the membrane as a helical; Signal-anchor for type II membrane protein segment. At 83 to 775 (KYLGPGAAGT…MNPVHKCSVW (693 aa)) the chain is on the lumenal side. In terms of domain architecture, Peptidase M13 spans 99–775 (GCPERKAFAR…MNPVHKCSVW (677 aa)). Disulfide bonds link C124/C760, C132/C720, C188/C441, and C649/C772. Residues N255 and N322 are each glycosylated (N-linked (GlcNAc...) asparagine). H612 is a Zn(2+) binding site. The active site involves E613. H616 contacts Zn(2+). N656 is a glycosylation site (N-linked (GlcNAc...) asparagine). E672 is a Zn(2+) binding site. The active-site Proton donor is D676.

Belongs to the peptidase M13 family. Zn(2+) serves as cofactor. In terms of tissue distribution, highly expressed in the CNS, in particular in neurons of the caudate putamen, diagonal band, the paraventricular nucleus of the thalamus, part of the hypothalamus, in cranial motor nuclei, inferior olive, and substantia gelatinosa of the spinal tract trigeminal nucleus. Not detected in cerebral cortex, hippocampus and cerebellum.

Its subcellular location is the membrane. Its function is as follows. May contribute to the degradation of peptide hormones and be involved in the inactivation of neuronal peptides. Cleaves the synthetic substrate Z-Gly-Gly-Leu-pNA and releases pNA. May protect against C2-ceramide-induced apoptosis. The sequence is that of Endothelin-converting enzyme-like 1 (Ecel1) from Rattus norvegicus (Rat).